The chain runs to 247 residues: Protein LIFEGUARD 4 (247 aa).

Helical transmembrane passes span 42 to 62, 75 to 95, 105 to 125, 130 to 150, 165 to 185, 188 to 208, and 222 to 242; these read VYSI…TVVF, AGLA…CPLY, YLLL…TCAF, VILE…VYTF, FLFG…FFPL, ISVM…IVYD, and IWAA…LLTI.

Belongs to the BI1 family.

Its subcellular location is the membrane. This Arabidopsis thaliana (Mouse-ear cress) protein is Protein LIFEGUARD 4.